Here is a 784-residue protein sequence, read N- to C-terminus: LPS-assembly protein LptD (784 aa).

The first 24 residues, 1-24 (MKKRIPTLLATMIATALYSQQGLA), serve as a signal peptide directing secretion. 2 disulfides stabilise this stretch: C31–C724 and C173–C725.

Belongs to the LptD family. In terms of assembly, component of the lipopolysaccharide transport and assembly complex. Interacts with LptE and LptA. Post-translationally, contains two intramolecular disulfide bonds.

It is found in the cell outer membrane. Its function is as follows. Together with LptE, is involved in the assembly of lipopolysaccharide (LPS) at the surface of the outer membrane. The protein is LPS-assembly protein LptD of Escherichia coli O157:H7.